A 601-amino-acid polypeptide reads, in one-letter code: Putative helicase 7 (601 aa).

The 166-residue stretch at 17–182 (QSFLMSDKNL…IIDAEIIKTD (166 aa)) folds into the Helicase ATP-binding domain. 30–37 (APTGTGKS) contributes to the ATP binding site. The short motif at 129-132 (DEIH) is the DEAH box element. The 168-residue stretch at 208-375 (LKEDFIKKMV…VLEDFLLALI (168 aa)) folds into the Helicase C-terminal domain.

This Saccharolobus islandicus (Sulfolobus islandicus) protein is Putative helicase 7 (SIFV0007).